We begin with the raw amino-acid sequence, 69 residues long: Ferredoxin-1 (69 aa).

Residues C12, C18, and C57 each coordinate [3Fe-4S] cluster.

Requires [3Fe-4S] cluster as cofactor.

Functionally, electron transport protein for the cytochrome P-450-SU1 system. The sequence is that of Ferredoxin-1 (suaB) from Streptomyces griseolus.